Here is a 196-residue protein sequence, read N- to C-terminus: 3-isopropylmalate dehydratase small subunit (196 aa).

It belongs to the LeuD family. LeuD type 1 subfamily. In terms of assembly, heterodimer of LeuC and LeuD.

It carries out the reaction (2R,3S)-3-isopropylmalate = (2S)-2-isopropylmalate. Its pathway is amino-acid biosynthesis; L-leucine biosynthesis; L-leucine from 3-methyl-2-oxobutanoate: step 2/4. Its function is as follows. Catalyzes the isomerization between 2-isopropylmalate and 3-isopropylmalate, via the formation of 2-isopropylmaleate. In Corynebacterium efficiens (strain DSM 44549 / YS-314 / AJ 12310 / JCM 11189 / NBRC 100395), this protein is 3-isopropylmalate dehydratase small subunit.